The chain runs to 239 residues: Norbelladine 4'-O-methyltransferase (239 aa).

Residues valine 55, glutamate 77, 79-80 (GV), serine 85, aspartate 103, and alanine 132 each bind S-adenosyl-L-methionine. Residue aspartate 155 participates in a divalent metal cation binding. Aspartate 157 is a binding site for S-adenosyl-L-methionine. The a divalent metal cation site is built by aspartate 181 and asparagine 182.

It belongs to the class I-like SAM-binding methyltransferase superfamily. Cation-dependent O-methyltransferase family. Mg(2+) serves as cofactor. As to expression, highly expressed in bulbs. Detected in leaves and inflorescences.

It carries out the reaction norbelladine + S-adenosyl-L-methionine = 4'-O-methylnorbelladine + S-adenosyl-L-homocysteine + H(+). It functions in the pathway alkaloid biosynthesis. Its function is as follows. 4'-O-methyltransferase converting norbelladine to 4'-O-methylnorbelladine. 4'-O-methylnorbelladine is a precursor to all Amaryllidaceae alkaloids such as galanthamine, lycorine and haemanthamine, and including haemanthamine- and crinamine-type alkaloids, promising anticancer agents. Can use norbelladine, N-methylnorbelladine and dopamine as substrate, but not caffeic acid, vanillin, 3,4-dihydroxybenzaldehyde and tyramine. The chain is Norbelladine 4'-O-methyltransferase from Narcissus aff. pseudonarcissus MK-2014 (Daffodil).